The sequence spans 536 residues: MEMFGVHNPATELATVGLGGAASVRYNFSAAALYEESIRRGEAELTAQGALRAITGQHTGRSPRDKFVVRDSNTDGEIWWDNNKPLSPEHFALLRADMLAHAAGKDLFVQDLIGGAEEGHALPTRVVTEFAWHSLFIRNLLIRPDAAALPSFAPKLTIIDLPSFKADPARHGCRSETVIACDLTNGLVLIGGTSYAGEMKKSVFTVLNYLLPAKGVMPMHCSANVGPNGDAAVFFGLSGTGKTTLSADPARTLIGDDEHGWSENGIFNFEGGCYAKTIRLSAEAEPEIYATTQRFGTVLENVVLNERREPNFDDGSLTENTRCAYPMDFIPNASETGRAGHPKTIIMLTADAFGVMPPIARLTPDQAMYHFLSGYTAKVAGTEKGVVEPEATFSTCFGAPFMPRHPAEYGNLLKELISRHGVECWLVNTGWTGGAYGTGKRMPIKATRALLAAALTGELGQVEFRADTNFGFAVPVSVNGVDSSILDPRSTWADKAAYDAQAEKLVSMFIANFAKFEGHVDGGVRDAAPGVKVAAE.

Positions 61, 195, and 201 each coordinate substrate. ATP is bound by residues K201, H220, and 236–244; that span reads GLSGTGKTT. Mn(2+)-binding residues include K201 and H220. Residue D257 participates in Mn(2+) binding. The ATP site is built by E285, R322, and T447. A substrate-binding site is contributed by R322.

The protein belongs to the phosphoenolpyruvate carboxykinase (ATP) family. Mn(2+) serves as cofactor.

It localises to the cytoplasm. The catalysed reaction is oxaloacetate + ATP = phosphoenolpyruvate + ADP + CO2. The protein operates within carbohydrate biosynthesis; gluconeogenesis. Involved in the gluconeogenesis. Catalyzes the conversion of oxaloacetate (OAA) to phosphoenolpyruvate (PEP) through direct phosphoryl transfer between the nucleoside triphosphate and OAA. This is Phosphoenolpyruvate carboxykinase (ATP) from Rhizobium leguminosarum bv. trifolii (strain WSM2304).